A 249-amino-acid polypeptide reads, in one-letter code: Zinc import ATP-binding protein ZnuC (249 aa).

Residues 1–219 form the ABC transporter domain; the sequence is MRLVSLRNAT…PEYQALFGSG (219 aa). 36–43 serves as a coordination point for ATP; sequence GPNGSGKS.

This sequence belongs to the ABC transporter superfamily. Zinc importer (TC 3.A.1.15.5) family. The complex is composed of two ATP-binding proteins (ZnuC), two transmembrane proteins (ZnuB) and a solute-binding protein (ZnuA).

The protein resides in the cell inner membrane. It catalyses the reaction Zn(2+)(out) + ATP(in) + H2O(in) = Zn(2+)(in) + ADP(in) + phosphate(in) + H(+)(in). Functionally, part of the ABC transporter complex ZnuABC involved in zinc import. Responsible for energy coupling to the transport system. The polypeptide is Zinc import ATP-binding protein ZnuC (Ruegeria sp. (strain TM1040) (Silicibacter sp.)).